A 384-amino-acid polypeptide reads, in one-letter code: 1-deoxy-D-xylulose 5-phosphate reductoisomerase (384 aa).

NADPH contacts are provided by Thr10, Gly11, Ser12, Ile13, Arg37, Asn38, and Asn124. Lys125 contacts 1-deoxy-D-xylulose 5-phosphate. Residue Glu126 participates in NADPH binding. Asp150 contributes to the Mn(2+) binding site. The 1-deoxy-D-xylulose 5-phosphate site is built by Ser151, Glu152, Ser176, and His199. Glu152 serves as a coordination point for Mn(2+). Gly205 provides a ligand contact to NADPH. Ser212, Asn217, Lys218, and Glu221 together coordinate 1-deoxy-D-xylulose 5-phosphate. Glu221 is a Mn(2+) binding site.

It belongs to the DXR family. Requires Mg(2+) as cofactor. It depends on Mn(2+) as a cofactor.

It catalyses the reaction 2-C-methyl-D-erythritol 4-phosphate + NADP(+) = 1-deoxy-D-xylulose 5-phosphate + NADPH + H(+). It participates in isoprenoid biosynthesis; isopentenyl diphosphate biosynthesis via DXP pathway; isopentenyl diphosphate from 1-deoxy-D-xylulose 5-phosphate: step 1/6. Its function is as follows. Catalyzes the NADPH-dependent rearrangement and reduction of 1-deoxy-D-xylulose-5-phosphate (DXP) to 2-C-methyl-D-erythritol 4-phosphate (MEP). This is 1-deoxy-D-xylulose 5-phosphate reductoisomerase from Clostridium perfringens (strain SM101 / Type A).